We begin with the raw amino-acid sequence, 60 residues long: Metallothionein (60 aa).

Methionine 1 bears the N-acetylmethionine mark. The interval 1–28 (MDPCECSKTGTCNCGGSCTCKNCSCTTC) is beta. A divalent metal cation contacts are provided by cysteine 4, cysteine 6, cysteine 12, cysteine 14, cysteine 18, cysteine 20, cysteine 23, cysteine 25, cysteine 28, cysteine 32, cysteine 33, cysteine 35, cysteine 36, cysteine 40, cysteine 43, cysteine 47, cysteine 49, cysteine 54, cysteine 58, and cysteine 59. An alpha region spans residues 29-60 (NKSCCPCCPSGCPKCASGCVCKGKTCDTSCCQ).

The protein belongs to the metallothionein superfamily. Type 1 family.

In terms of biological role, metallothioneins have a high content of cysteine residues that bind various heavy metals. This Pleuronectes platessa (European plaice) protein is Metallothionein (mt).